A 529-amino-acid chain; its full sequence is Transcription activator of gluconeogenesis ERT1 (529 aa).

The segment at 1–31 is disordered; it reads MCTPDENDYKTSTDPDTSANTNHTLEKKKRK. Polar residues predominate over residues 14–23; the sequence is DPDTSANTNH. The segment at residues 40–68 is a DNA-binding region (zn(2)-C6 fungal-type); the sequence is CVNCSRLHVSCEAKRPCLRCISKGLTATC. Residues 174–193 are compositionally biased toward low complexity; the sequence is SNSTIGNSSNNSPTGTNTSP. A disordered region spans residues 174-198; sequence SNSTIGNSSNNSPTGTNTSPEETEM. The 73-residue stretch at 408–480 folds into the PAS domain; the sequence is TLLEYVKFIA…KTLSKVAYRD (73 aa).

Belongs to the ERT1/acuK family.

The protein resides in the cytoplasm. The protein localises to the nucleus. Its function is as follows. Transcription factor which regulates nonfermentable carbon utilization. Activator of gluconeogenetic genes like PCK1. Involved in restriction of Ty1 transposition. In Saccharomyces cerevisiae (strain ATCC 204508 / S288c) (Baker's yeast), this protein is Transcription activator of gluconeogenesis ERT1 (ERT1).